The following is a 149-amino-acid chain: SsrA-binding protein (149 aa).

The protein belongs to the SmpB family.

Its subcellular location is the cytoplasm. In terms of biological role, required for rescue of stalled ribosomes mediated by trans-translation. Binds to transfer-messenger RNA (tmRNA), required for stable association of tmRNA with ribosomes. tmRNA and SmpB together mimic tRNA shape, replacing the anticodon stem-loop with SmpB. tmRNA is encoded by the ssrA gene; the 2 termini fold to resemble tRNA(Ala) and it encodes a 'tag peptide', a short internal open reading frame. During trans-translation Ala-aminoacylated tmRNA acts like a tRNA, entering the A-site of stalled ribosomes, displacing the stalled mRNA. The ribosome then switches to translate the ORF on the tmRNA; the nascent peptide is terminated with the 'tag peptide' encoded by the tmRNA and targeted for degradation. The ribosome is freed to recommence translation, which seems to be the essential function of trans-translation. The polypeptide is SsrA-binding protein (Thermosipho africanus (strain TCF52B)).